The primary structure comprises 337 residues: Aspartate carbamoyltransferase catalytic subunit (337 aa).

The carbamoyl phosphate site is built by Arg-59 and Thr-60. Lys-87 serves as a coordination point for L-aspartate. Residues Arg-109, His-142, and Gln-145 each coordinate carbamoyl phosphate. Positions 182 and 253 each coordinate L-aspartate. Carbamoyl phosphate contacts are provided by Gly-294 and Pro-295.

This sequence belongs to the aspartate/ornithine carbamoyltransferase superfamily. ATCase family. As to quaternary structure, heterododecamer (2C3:3R2) of six catalytic PyrB chains organized as two trimers (C3), and six regulatory PyrI chains organized as three dimers (R2).

The enzyme catalyses carbamoyl phosphate + L-aspartate = N-carbamoyl-L-aspartate + phosphate + H(+). It participates in pyrimidine metabolism; UMP biosynthesis via de novo pathway; (S)-dihydroorotate from bicarbonate: step 2/3. Its function is as follows. Catalyzes the condensation of carbamoyl phosphate and aspartate to form carbamoyl aspartate and inorganic phosphate, the committed step in the de novo pyrimidine nucleotide biosynthesis pathway. The sequence is that of Aspartate carbamoyltransferase catalytic subunit from Prochlorococcus marinus (strain MIT 9211).